The primary structure comprises 369 residues: Type 2 DNA topoisomerase 6 subunit A (369 aa).

One can recognise a Topo IIA-type catalytic domain in the interval 11–149 (KGDALAREKL…FHMRPEEDGA (139 aa)). Residue tyrosine 106 is the O-(5'-phospho-DNA)-tyrosine intermediate of the active site. 2 residues coordinate Mg(2+): glutamate 202 and aspartate 254.

The protein belongs to the TOP6A family. In terms of assembly, homodimer. Heterotetramer of two Top6A and two Top6B chains. The cofactor is Mg(2+).

It carries out the reaction ATP-dependent breakage, passage and rejoining of double-stranded DNA.. In terms of biological role, relaxes both positive and negative superturns and exhibits a strong decatenase activity. The polypeptide is Type 2 DNA topoisomerase 6 subunit A (Methanosarcina mazei (strain ATCC BAA-159 / DSM 3647 / Goe1 / Go1 / JCM 11833 / OCM 88) (Methanosarcina frisia)).